Reading from the N-terminus, the 356-residue chain is Tyrosine recombinase XerS (356 aa).

The Core-binding (CB) domain maps to 16-121 (IMPWYVLDYY…ALSSLYKYLT (106 aa)). The region spanning 169-354 (AFLDYVDKEY…VNDEQKNALD (186 aa)) is the Tyr recombinase domain. Residues Arg-210, Lys-234, His-306, Arg-309, and His-332 contribute to the active site. The O-(3'-phospho-DNA)-tyrosine intermediate role is filled by Tyr-341.

The protein belongs to the 'phage' integrase family. XerS subfamily.

The protein resides in the cytoplasm. With respect to regulation, ftsK is required for recombination. Functionally, site-specific tyrosine recombinase, which acts by catalyzing the cutting and rejoining of the recombining DNA molecules. Essential to convert dimers of the bacterial chromosome into monomers to permit their segregation at cell division. The chain is Tyrosine recombinase XerS from Streptococcus equi subsp. equi (strain 4047).